A 638-amino-acid polypeptide reads, in one-letter code: Golgin subfamily A member 8S (638 aa).

Residues 1–11 (MWPQARLPPHP) are compositionally biased toward pro residues. The interval 1–84 (MWPQARLPPH…GESPTSSATL (84 aa)) is disordered. The span at 50-62 (TNGSIHETATSGG) shows a compositional bias: polar residues. Coiled coils occupy residues 105-160 (VSQL…LNTD), 223-275 (LEQS…MSQE), and 318-417 (EAEL…QQKQ). Disordered stretches follow at residues 427-453 (ALPGEGDGGGHLDSEGEEAPRPIPSIP), 510-532 (KDAALGGGHHQAGAQGGDEDEAA), and 556-575 (AHNPADEPGPGAPAPQELGA). Residues 434 to 446 (GGGHLDSEGEEAP) are compositionally biased toward basic and acidic residues. Residues 514 to 525 (LGGGHHQAGAQG) are compositionally biased toward gly residues. Positions 561–574 (DEPGPGAPAPQELG) are enriched in low complexity.

The protein belongs to the GOLGA8 family.

This is Golgin subfamily A member 8S from Homo sapiens (Human).